We begin with the raw amino-acid sequence, 101 residues long: Urease subunit beta (101 aa).

The protein belongs to the urease beta subunit family. Heterotrimer of UreA (gamma), UreB (beta) and UreC (alpha) subunits. Three heterotrimers associate to form the active enzyme.

The protein localises to the cytoplasm. The catalysed reaction is urea + 2 H2O + H(+) = hydrogencarbonate + 2 NH4(+). The protein operates within nitrogen metabolism; urea degradation; CO(2) and NH(3) from urea (urease route): step 1/1. This chain is Urease subunit beta, found in Allorhizobium ampelinum (strain ATCC BAA-846 / DSM 112012 / S4) (Agrobacterium vitis (strain S4)).